The sequence spans 104 residues: Ribonucleotide reductase inhibitor protein SML1 (104 aa).

An N-acetylmethionine modification is found at Met1. The interval 43-62 (PMLSTQNSMGSSASASASSL) is disordered. 3 positions are modified to phosphoserine; by DUN1: Ser56, Ser58, and Ser60.

As to quaternary structure, homodimer; disulfide-linked. Interacts with RNR1. Post-translationally, phosphorylated by DUN1, a downstream effector of the Mec1/Rad53 checkpoint pathway, in response to DNA damage. This promotes ubiquitination of SML1 and targets it for degradation by the 26S proteasome.

The protein resides in the nucleus. Its subcellular location is the cytoplasm. In terms of biological role, strong inhibitor of ribonucleotide reductase (RNR1) and is involved in regulating dNTP production. This Saccharomyces cerevisiae (strain ATCC 204508 / S288c) (Baker's yeast) protein is Ribonucleotide reductase inhibitor protein SML1 (SML1).